The primary structure comprises 81 residues: WAP four-disulfide core domain protein 13 (81 aa).

The first 22 residues, 1–22 (MRPVSPLQLLLVLSLAPQPVLG), serve as a signal peptide directing secretion. One can recognise a WAP domain in the interval 31 to 74 (YILEPPPCRSEPGACNMFCTQQEECPEPLQCCSAYCGIVCTSNQ). 4 cysteine pairs are disulfide-bonded: Cys-38–Cys-62, Cys-45–Cys-66, Cys-49–Cys-61, and Cys-55–Cys-70.

The protein localises to the secreted. Its function is as follows. Putative acid-stable proteinase inhibitor. This chain is WAP four-disulfide core domain protein 13 (Wfdc13), found in Mus musculus (Mouse).